A 354-amino-acid polypeptide reads, in one-letter code: UDP-N-acetylglucosamine--N-acetylmuramyl-(pentapeptide) pyrophosphoryl-undecaprenol N-acetylglucosamine transferase (354 aa).

UDP-N-acetyl-alpha-D-glucosamine contacts are provided by residues 15–17 (TGG), asparagine 127, arginine 163, serine 191, isoleucine 242, 261–266 (ALTVSE), and glutamine 286.

It belongs to the glycosyltransferase 28 family. MurG subfamily.

It is found in the cell inner membrane. It catalyses the reaction di-trans,octa-cis-undecaprenyl diphospho-N-acetyl-alpha-D-muramoyl-L-alanyl-D-glutamyl-meso-2,6-diaminopimeloyl-D-alanyl-D-alanine + UDP-N-acetyl-alpha-D-glucosamine = di-trans,octa-cis-undecaprenyl diphospho-[N-acetyl-alpha-D-glucosaminyl-(1-&gt;4)]-N-acetyl-alpha-D-muramoyl-L-alanyl-D-glutamyl-meso-2,6-diaminopimeloyl-D-alanyl-D-alanine + UDP + H(+). Its pathway is cell wall biogenesis; peptidoglycan biosynthesis. Its function is as follows. Cell wall formation. Catalyzes the transfer of a GlcNAc subunit on undecaprenyl-pyrophosphoryl-MurNAc-pentapeptide (lipid intermediate I) to form undecaprenyl-pyrophosphoryl-MurNAc-(pentapeptide)GlcNAc (lipid intermediate II). In Pasteurella multocida (strain Pm70), this protein is UDP-N-acetylglucosamine--N-acetylmuramyl-(pentapeptide) pyrophosphoryl-undecaprenol N-acetylglucosamine transferase.